The following is a 307-amino-acid chain: Cyclin-dependent kinase 5 activator 1 (307 aa).

Serine 8 carries the phosphoserine; by CDK5 modification. Residues 96–136 form a disordered region; it reads STFAQPPPAQPPAPPANQLSGSQTGVSSSVKKAPHPSVTSA. A compositionally biased stretch (pro residues) spans 100–110; the sequence is QPPPAQPPAPP. The span at 112 to 125 shows a compositional bias: polar residues; sequence NQLSGSQTGVSSSV. Position 138 is a phosphothreonine; by CDK5 (threonine 138).

It belongs to the cyclin-dependent kinase 5 activator family. As to quaternary structure, heterodimer composed of a catalytic subunit CDK5 and a regulatory subunit CDK5R1 (p25) and macromolecular complex composed of at least CDK5, CDK5R1 (p35) and CDK5RAP1 or CDK5RAP2 or CDK5RAP3. Only the heterodimer shows kinase activity. Interacts with EPHA4 and NGEF; may mediate the activation of NGEF by EPHA4. Interacts with RASGRF2. The complex p35/CDK5 interacts with CLOCK. The p35 form is proteolytically cleaved by calpain, giving rise to the p25 form. P35 has a 5 to 10 fold shorter half-life compared to p25. The conversion results in deregulation of the CDK5 kinase: p25/CDK5 kinase displays an increased and altered tau phosphorylation in comparison to the p35/CDK5 kinase in vivo. Post-translationally, myristoylated. A proper myristoylation signal is essential for the proper distribution of p35. In terms of processing, phosphorylation at Ser-8 and Thr-138 by CDK5 prevents calpain-mediated proteolysis. Ubiquitinated, leading to its degradation: degradation of p35 by proteasome results in down-regulation of CDK5 activity. During this process, CDK5 phosphorylates p35 and induces its ubiquitination and subsequent degradation. Ubiquitinated by the CRL2(FEM1B) complex, which recognizes the -Gly-Leu-Asp-Arg C-degron at the C-terminus, leading to its degradation. In terms of tissue distribution, brain and neuron specific.

It localises to the cell membrane. The protein resides in the cell projection. It is found in the neuron projection. The protein localises to the nucleus. Its subcellular location is the cytoplasm. It localises to the perinuclear region. The protein resides in the perikaryon. P35 is a neuron specific activator of CDK5. The complex p35/CDK5 is required for neurite outgrowth and cortical lamination. Involved in dendritic spine morphogenesis by mediating the EFNA1-EPHA4 signaling. Activator of TPKII. The complex p35/CDK5 participates in the regulation of the circadian clock by modulating the function of CLOCK protein: phosphorylates CLOCK at 'Thr-451' and 'Thr-461' and regulates the transcriptional activity of the CLOCK-BMAL1 heterodimer in association with altered stability and subcellular distribution. This Spermophilus citellus (European ground squirrel) protein is Cyclin-dependent kinase 5 activator 1 (CDK5R1).